Reading from the N-terminus, the 195-residue chain is N-(5'-phosphoribosyl)anthranilate isomerase (195 aa).

This sequence belongs to the TrpF family.

It catalyses the reaction N-(5-phospho-beta-D-ribosyl)anthranilate = 1-(2-carboxyphenylamino)-1-deoxy-D-ribulose 5-phosphate. It participates in amino-acid biosynthesis; L-tryptophan biosynthesis; L-tryptophan from chorismate: step 3/5. This is N-(5'-phosphoribosyl)anthranilate isomerase from Methanoregula boonei (strain DSM 21154 / JCM 14090 / 6A8).